The following is a 449-amino-acid chain: MAQFFKAKPNSSKQLSAKQSFSVHQLDHLGAGIAQHQGKVVFIPGALPSETVQAQLTEQKKNYARAKLIKVETPSAERVTPLCPHYQSCGGCDLQHMSLAGQREHKSAALVDIMAKFAGAEGNSVPALTGEGWHYRRRARLATLFDKNTKQLSLGFRASSSNQVVPIDSCLVLAKPLSDLIAPFAKLLNQLAAKSSLGHLELIDADNGHFAVIRITKSLNDKDMAKLAQFAEQHQIHICLQDNNGEFHGVNGTLLLPVYQLLDDKADATPVSLTFTPGNFVQVNAQINKAMVAQALDWLAPQPGERILDLFCGMGNFSLPLAKLGAEVIGVEGVPEMVSQARENAAANGLSNLTFYHGDLSADLSCEPWMGKIDKLLLDPARAGAFESLQWLKKMKPRQVVYVSCNPASLARDSAVLLERGYKLQKLGLIDMFPQTHHIEAMALFELAK.

Residues 12 to 70 (SKQLSAKQSFSVHQLDHLGAGIAQHQGKVVFIPGALPSETVQAQLTEQKKNYARAKLIK) form the TRAM domain. [4Fe-4S] cluster-binding residues include Cys-83, Cys-89, Cys-92, and Cys-170. Gln-282, Phe-311, Asn-316, Glu-332, Asp-359, and Asp-379 together coordinate S-adenosyl-L-methionine. Cys-405 serves as the catalytic Nucleophile.

This sequence belongs to the class I-like SAM-binding methyltransferase superfamily. RNA M5U methyltransferase family. RlmD subfamily.

The catalysed reaction is uridine(1939) in 23S rRNA + S-adenosyl-L-methionine = 5-methyluridine(1939) in 23S rRNA + S-adenosyl-L-homocysteine + H(+). Catalyzes the formation of 5-methyl-uridine at position 1939 (m5U1939) in 23S rRNA. This chain is 23S rRNA (uracil(1939)-C(5))-methyltransferase RlmD, found in Shewanella sp. (strain MR-7).